The chain runs to 321 residues: Probable NAD(P)H-dependent D-xylose reductase xyl1 (321 aa).

Tyrosine 50 serves as the catalytic Proton donor. Substrate is bound at residue histidine 112. Residues 166–167 (SN), 215–224 (SSFGPLSFVE), and 271–281 (KSNDPTRLAQN) contribute to the NAD(+) site.

It belongs to the aldo/keto reductase family.

It catalyses the reaction xylitol + NAD(+) = D-xylose + NADH + H(+). The enzyme catalyses xylitol + NADP(+) = D-xylose + NADPH + H(+). It functions in the pathway carbohydrate metabolism; D-xylose degradation. In terms of biological role, catalyzes the initial reaction in the xylose utilization pathway by reducing D-xylose into xylitol. Xylose is a major component of hemicelluloses such as xylan. Most fungi utilize D-xylose via three enzymatic reactions, xylose reductase (XR), xylitol dehydrogenase (XDH), and xylulokinase, to form xylulose 5-phosphate, which enters pentose phosphate pathway. The protein is Probable NAD(P)H-dependent D-xylose reductase xyl1 (xyl1) of Neosartorya fischeri (strain ATCC 1020 / DSM 3700 / CBS 544.65 / FGSC A1164 / JCM 1740 / NRRL 181 / WB 181) (Aspergillus fischerianus).